A 157-amino-acid chain; its full sequence is Large ribosomal subunit protein uL10 (157 aa).

This sequence belongs to the universal ribosomal protein uL10 family. In terms of assembly, part of the ribosomal stalk of the 50S ribosomal subunit. The N-terminus interacts with L11 and the large rRNA to form the base of the stalk. The C-terminus forms an elongated spine to which L12 dimers bind in a sequential fashion forming a multimeric L10(L12)X complex.

In terms of biological role, forms part of the ribosomal stalk, playing a central role in the interaction of the ribosome with GTP-bound translation factors. This is Large ribosomal subunit protein uL10 from Campylobacter hominis (strain ATCC BAA-381 / DSM 21671 / CCUG 45161 / LMG 19568 / NCTC 13146 / CH001A).